A 464-amino-acid polypeptide reads, in one-letter code: tRNA modification GTPase MnmE (464 aa).

(6S)-5-formyl-5,6,7,8-tetrahydrofolate is bound by residues R27, E89, and R128. Residues 225-384 (GLATAIVGRP…LEETIAHLFF (160 aa)) enclose the TrmE-type G domain. Residue N235 participates in K(+) binding. GTP is bound by residues 235 to 240 (NVGKSS), 254 to 260 (TDVAGTT), and 279 to 282 (DTAG). S239 lines the Mg(2+) pocket. K(+) contacts are provided by T254, V256, and T259. Position 260 (T260) interacts with Mg(2+). K464 is a binding site for (6S)-5-formyl-5,6,7,8-tetrahydrofolate.

This sequence belongs to the TRAFAC class TrmE-Era-EngA-EngB-Septin-like GTPase superfamily. TrmE GTPase family. As to quaternary structure, homodimer. Heterotetramer of two MnmE and two MnmG subunits. It depends on K(+) as a cofactor.

The protein resides in the cytoplasm. Its function is as follows. Exhibits a very high intrinsic GTPase hydrolysis rate. Involved in the addition of a carboxymethylaminomethyl (cmnm) group at the wobble position (U34) of certain tRNAs, forming tRNA-cmnm(5)s(2)U34. This chain is tRNA modification GTPase MnmE, found in Levilactobacillus brevis (strain ATCC 367 / BCRC 12310 / CIP 105137 / JCM 1170 / LMG 11437 / NCIMB 947 / NCTC 947) (Lactobacillus brevis).